Here is a 376-residue protein sequence, read N- to C-terminus: MAKRDYYEVLGVAKNASDDEIKKAYRKLAMKYHPDRNPDSKDAEEHFKEAKEAYEMLSDSQKRAAYDQYGHAGVDPNMGAAGAQGFGGFADAFGDIFGDIFGQAAGGGRGRGGPQVYRGADLRYSMEITLEQAAHGYDTQIRVPSWASCGICHGSGAKPGTKPETCPTCHGQGTVRMSQGFFSIQQTCPKCHGTGTYIPEPCVHCHGSGKVKETKTLEVKIPAGIDDGMRIRSAGNGEPGINGGPSGDLYVEIHIKPHPVFERDGDDLHCQMPIPFTTAALGGEIEVPTLAGRASFTVAEGTQSGKTFRLRGKGIKGLRSSIAGDLYVHVQVETPVKLTDQQRDLLKQFEKSLAEGGPRHSPQSKSWFDRVKSFFE.

Residues 5 to 70 (DYYEVLGVAK…QKRAAYDQYG (66 aa)) form the J domain. The segment at 136–214 (GYDTQIRVPS…CHGSGKVKET (79 aa)) adopts a CR-type zinc-finger fold. Cys-149, Cys-152, Cys-166, Cys-169, Cys-188, Cys-191, Cys-202, and Cys-205 together coordinate Zn(2+). 4 CXXCXGXG motif repeats span residues 149–156 (CGICHGSG), 166–173 (CPTCHGQG), 188–195 (CPKCHGTG), and 202–209 (CVHCHGSG).

It belongs to the DnaJ family. Homodimer. Zn(2+) serves as cofactor.

Its subcellular location is the cytoplasm. Participates actively in the response to hyperosmotic and heat shock by preventing the aggregation of stress-denatured proteins and by disaggregating proteins, also in an autonomous, DnaK-independent fashion. Unfolded proteins bind initially to DnaJ; upon interaction with the DnaJ-bound protein, DnaK hydrolyzes its bound ATP, resulting in the formation of a stable complex. GrpE releases ADP from DnaK; ATP binding to DnaK triggers the release of the substrate protein, thus completing the reaction cycle. Several rounds of ATP-dependent interactions between DnaJ, DnaK and GrpE are required for fully efficient folding. Also involved, together with DnaK and GrpE, in the DNA replication of plasmids through activation of initiation proteins. This chain is Chaperone protein DnaJ, found in Burkholderia thailandensis (strain ATCC 700388 / DSM 13276 / CCUG 48851 / CIP 106301 / E264).